Here is a 565-residue protein sequence, read N- to C-terminus: MYRSRNRPKRGGENEVKGPNSALTQFLREEGISAENIKQKWYQRQSKKQEDATDEKKGKAEDDSFTAEISRVVEDEEIDEIGTGSGTETERAQVSYDARMKLVPADSDEEEYETSHISDTPVSLSSANDRESLTKKRQNTAKIIQNRRRKRKRAADLLDRRVNKVSSLQSLCITKISENISKWQKEADESSKLVFNKLRDVLGGVSTANLNNLAKALSKNRALNDHTLQLFLKTDLKRLTFSDCSKISFDGYKTLAIFSPHLTELSLQMCGQLNHESLLYIAEKLPNLKSLNLDGPFLINEDTWEKFFVIMKGRLEEFHISNTHRFTDKSLSNLLINCGSTLVSLGLSRLDSISNYALLPQYLVNDEFHSLCIEYPFNEEDVNDEIIINLLGQIGRTLRKLVLNGCIDLTDSMIINGLTAFIPEKCPLEVLSLEESDQITTDSLSYFFSKVELNNLIECSFRRCLQLGDMAIIELLLNGARDSLRSLNLNSLKELTKEAFVALACPNLTYLDLGFVRCVDDSVIQMLGEQNPNLTVIDVFGDNLVTEKATMRPGLTLIGRQSDSI.

Disordered regions lie at residues 1–22 and 41–68; these read MYRS…PNSA and WYQR…FTAE. Residues 1–200 form a hydrophilic region; it reads MYRSRNRPKR…SKLVFNKLRD (200 aa). Residues 47–62 show a composition bias toward basic and acidic residues; it reads KKQEDATDEKKGKAED. Serine 64 and serine 85 each carry phosphoserine. Residues 105–137 are disordered; sequence ADSDEEEYETSHISDTPVSLSSANDRESLTKKR. The span at 115-127 shows a compositional bias: polar residues; that stretch reads SHISDTPVSLSSA.

It to S.pombe SpCC613.14. In terms of assembly, component of the global genome repair (GGR) complex composed of at least ABF1, RAD7 and RAD16. Interacts with ELC1.

Functionally, component of the global genome repair (GGR) complex which promotes global genome nucleotide excision repair (GG-NER) which removes DNA damage from nontranscribing DNA. This protein is one of 10 proteins (RAD1, 2,3,4,7,10,14, 16,23 and MMS19) involved in excision repair of DNA damaged with UV light, bulky adducts, or cross-linking agents. The sequence is that of DNA repair protein RAD7 (RAD7) from Saccharomyces cerevisiae (strain ATCC 204508 / S288c) (Baker's yeast).